Here is a 56-residue protein sequence, read N- to C-terminus: MAVQKSKKSRAARGMRRSHDALTTAAVSVDSASGETHLRHHVTADGFYRGRKVINK.

The span at 1–16 (MAVQKSKKSRAARGMR) shows a compositional bias: basic residues. The disordered stretch occupies residues 1–22 (MAVQKSKKSRAARGMRRSHDAL).

This sequence belongs to the bacterial ribosomal protein bL32 family.

In Photobacterium profundum (strain SS9), this protein is Large ribosomal subunit protein bL32.